We begin with the raw amino-acid sequence, 211 residues long: LexA repressor (211 aa).

Residues 27–47 (QTEIARAFGFKGVRAVQHHLD) constitute a DNA-binding region (H-T-H motif). Residues S131 and K168 each act as for autocatalytic cleavage activity in the active site.

Belongs to the peptidase S24 family. In terms of assembly, homodimer.

It carries out the reaction Hydrolysis of Ala-|-Gly bond in repressor LexA.. In terms of biological role, represses a number of genes involved in the response to DNA damage (SOS response), including recA and lexA. In the presence of single-stranded DNA, RecA interacts with LexA causing an autocatalytic cleavage which disrupts the DNA-binding part of LexA, leading to derepression of the SOS regulon and eventually DNA repair. This chain is LexA repressor, found in Xylella fastidiosa (strain M12).